Reading from the N-terminus, the 205-residue chain is Peptidyl-prolyl cis-trans isomerase B (205 aa).

Residues 1-20 form the signal peptide; that stretch reads MKFSGLWCWLLLFLSVNVIA. The PPIase cyclophilin-type domain maps to 39–198; the sequence is FFDIEHGEEK…EAVKIAKCGE (160 aa).

The protein belongs to the cyclophilin-type PPIase family. PPIase B subfamily.

The protein resides in the secreted. The catalysed reaction is [protein]-peptidylproline (omega=180) = [protein]-peptidylproline (omega=0). With respect to regulation, cyclosporin A (CsA) inhibits CYPB. Its function is as follows. PPIases accelerate the folding of proteins. It catalyzes the cis-trans isomerization of proline imidic peptide bonds in oligopeptides. The sequence is that of Peptidyl-prolyl cis-trans isomerase B (CPR2) from Saccharomyces cerevisiae (strain ATCC 204508 / S288c) (Baker's yeast).